A 605-amino-acid polypeptide reads, in one-letter code: Protein cueball (605 aa).

An N-terminal signal peptide occupies residues 1–31 (MAYIDQKHNTFWDDFAIALRDKIVFLNSTWG). N-linked (GlcNAc...) asparagine glycosylation is found at N27, N64, and N85. Residues 32 to 486 (EIHASAHRFE…QCGPAPPVQG (455 aa)) lie on the Extracellular side of the membrane. 4 LDL-receptor class B repeats span residues 53–97 (EMIY…DPLN), 98–145 (RNLF…DICR), 146–190 (RQLY…DQLS), and 191–236 (DRIF…NEDA). N-linked (GlcNAc...) asparagine glycosylation is found at N261 and N314. EGF-like domains follow at residues 322–359 (EGDR…ARCE) and 394–431 (EYHK…ERCE). Disulfide bonds link C334-C347, C349-C358, C398-C408, C402-C419, and C421-C430. Residues N433 and N464 are each glycosylated (N-linked (GlcNAc...) asparagine). The chain crosses the membrane as a helical span at residues 487 to 507 (PLIIVIVLGLVTTSGLVALTV). At 508–605 (HGVRLIYKPK…IHSMEDNLLS (98 aa)) the chain is on the cytoplasmic side.

It belongs to the cueball family.

It localises to the cell membrane. In terms of biological role, has a role in spermatogenesis and oogenesis. This Drosophila grimshawi (Hawaiian fruit fly) protein is Protein cueball.